The following is a 172-amino-acid chain: Avenin-like a4 (172 aa).

A signal peptide spans methionine 1 to alanine 19.

Belongs to the prolamin family. Post-translationally, contains 7 disulfide bonds.

In terms of biological role, seed storage protein. Not integrated in the gluten polymer through disulfide bonds, unless incorporated by reduction and reoxidation during dough making. Increases dough strength and bread volume, but decreases dough stability when added into a base wheat flour. The polypeptide is Avenin-like a4 (Triticum aestivum (Wheat)).